The sequence spans 92 residues: DNA-directed RNA polymerase subunit omega (92 aa).

Belongs to the RNA polymerase subunit omega family. As to quaternary structure, the RNAP catalytic core consists of 2 alpha, 1 beta, 1 beta' and 1 omega subunit. When a sigma factor is associated with the core the holoenzyme is formed, which can initiate transcription.

The catalysed reaction is RNA(n) + a ribonucleoside 5'-triphosphate = RNA(n+1) + diphosphate. Functionally, promotes RNA polymerase assembly. Latches the N- and C-terminal regions of the beta' subunit thereby facilitating its interaction with the beta and alpha subunits. This chain is DNA-directed RNA polymerase subunit omega, found in Shewanella frigidimarina (strain NCIMB 400).